Consider the following 683-residue polypeptide: Glycine--tRNA ligase beta subunit (683 aa).

Belongs to the class-II aminoacyl-tRNA synthetase family. As to quaternary structure, tetramer of two alpha and two beta subunits.

The protein localises to the cytoplasm. It carries out the reaction tRNA(Gly) + glycine + ATP = glycyl-tRNA(Gly) + AMP + diphosphate. This Pseudomonas putida (strain GB-1) protein is Glycine--tRNA ligase beta subunit.